Reading from the N-terminus, the 241-residue chain is Large ribosomal subunit protein uL1 (241 aa).

It belongs to the universal ribosomal protein uL1 family. As to quaternary structure, part of the 50S ribosomal subunit.

Its function is as follows. Binds directly to 23S rRNA. The L1 stalk is quite mobile in the ribosome, and is involved in E site tRNA release. Functionally, protein L1 is also a translational repressor protein, it controls the translation of the L11 operon by binding to its mRNA. This Streptomyces coelicolor (strain ATCC BAA-471 / A3(2) / M145) protein is Large ribosomal subunit protein uL1.